Reading from the N-terminus, the 368-residue chain is G kinase-anchoring protein 1 (368 aa).

Disordered stretches follow at residues 18–127 (LQVD…WKQR), 152–260 (EEHK…VRTE), and 333–368 (LHTA…EGDV). Positions 33–56 (PKAAGRGAGKPRSGKSPSGKNSQN) are enriched in low complexity. Residues 52–82 (KNSQNNEKKKEKRRRKKEQQQSEANELRSLA) adopt a coiled-coil conformation. Composition is skewed to polar residues over residues 88–100 (QKST…TLQD) and 109–121 (ANVQ…QENW). Positions 152-162 (EEHKKDADKAE) are enriched in basic and acidic residues. Residues 170–180 (TGGKKDRKKNQ) show a composition bias toward basic residues. The segment covering 194–238 (FQQEDQLKNKPEREPVNPALRDDKFFNKLEDDVSKIVQRDKRREQ) has biased composition (basic and acidic residues). A compositionally biased stretch (polar residues) spans 239-250 (YSNSAGQEVNTS). Over residues 251–260 (SEHEQDVRTE) the composition is skewed to basic and acidic residues. The stretch at 256–350 (DVRTEQLKYE…RSKVKGLQSE (95 aa)) forms a coiled coil.

The protein belongs to the GKAP1 family.

The protein resides in the golgi apparatus. In terms of biological role, may play a role in the regulation of insulin-dependent IRS1 tyrosine phosphorylation in adipocytes. The sequence is that of G kinase-anchoring protein 1 (gkap1) from Danio rerio (Zebrafish).